The following is a 1229-amino-acid chain: MPPLTQSVVLQPLIVPNDVGIDALHRGKIERYSFARISNAIELPKLIETQLNSFEWFRKEGLRELFEEISPITDFTGKNMELRFLDYHFGEPRYNEHECRERGITYSAPIRVNVQLRILSTGELKESEIFLGDFPLMTENGTFVINGAERVVVSQLIRSPGVYFKEEKDPTSGRSLHSAKLIPSRGAWLEFETNKRDVISVKVDRKRKIPVTILLRAVLGWRANPDGSGQWAPDNELDQRGRDEEILELFAHLETGDHQYIKATLDKDPARHAKEALLELYKRLRPGDPPTLDNARNLIEALLFNPRRYDLSRVGRYKLNKNLWEKDTRPEVRRQAPDVKVRVLLPDDIFKIVERMIQLNNGTPGLRADDIDHLGNRRVRTVGELIQQQFRVGLLRMERVIKERMSLQDPETATPNALVNIRPVVAAMREFFGGAQLSQFMDQTNPLAELTHKRRLSALGPGGLSRDRAGFEVRDVHHSHYGRICPVETPEGPNIGLIGTMSTYARVNEMGFLETPYRKVYREVPNASEWERQGLLLRDVRDLRTGELIAVRGTRVDAAVARRIAVALLRGQILREDVVDPTTGEVIAHAGQEVNRALAERIVETPLKIIKIRPVVSQEVDYLSADEEDRFVIVQANAPLDEHNRFLEGTVSVRYAGDFDDVPIERVDYMDVSPKQVVSVSTALIPFLEHDDANRALMGSNMQRQAVPLLRPDAPIVGTGMEYVAARDSGQVVVAKADGVVLSATADEIVILEDDGNERSYRLRKFMRSNQDTCINQRPIVSRGQRVRKGDIIADSSSTDNGELALGQNVLVAFMPWEGGNFEDAILVSERLVREDIFTSIHIEKYEVEARDTKLGPEEITRDIPNVGQDSLRNLDDRGIIYIGAEVQPNDILVGKITPKGETDLTAEERLLRAIFGEKAREVKDSSLRVPNGVRGKVIDVKVFTRDDDVELPVGVNQRVDVLLCQKRKISAGDKMAGRHGNKGVVSRILPIEDMPFLPDGTPVDIILNPIGVPSRMNIGQILETHLGWAAARLGYRVATPVFDGATETEIKEWLKRADLPPDGKITLYDGRTGEAFDRPVTVGYIYMMKLAHLVEDKIHARSTGPYSLVTQQPLGGKAQFGGQRFGEMEVWALEAYGAAYTLQEMLTVKSDDVVGRVKTYEAIVKGEPIQEAGVPESFKVLIKELQSLGLSVEVLSADETPVELTDDADSDLAALDGINLSGMERGEF.

The protein belongs to the RNA polymerase beta chain family. The RNAP catalytic core consists of 2 alpha, 1 beta, 1 beta' and 1 omega subunit. When a sigma factor is associated with the core the holoenzyme is formed, which can initiate transcription.

The enzyme catalyses RNA(n) + a ribonucleoside 5'-triphosphate = RNA(n+1) + diphosphate. In terms of biological role, DNA-dependent RNA polymerase catalyzes the transcription of DNA into RNA using the four ribonucleoside triphosphates as substrates. In Roseiflexus sp. (strain RS-1), this protein is DNA-directed RNA polymerase subunit beta.